Reading from the N-terminus, the 343-residue chain is tRNA N6-adenosine threonylcarbamoyltransferase (343 aa).

Fe cation contacts are provided by His-115 and His-119. Substrate is bound by residues 138 to 142 (LVSGA), Asp-171, Gly-184, and Asn-276. Asp-304 lines the Fe cation pocket.

This sequence belongs to the KAE1 / TsaD family. Fe(2+) serves as cofactor.

Its subcellular location is the cytoplasm. It catalyses the reaction L-threonylcarbamoyladenylate + adenosine(37) in tRNA = N(6)-L-threonylcarbamoyladenosine(37) in tRNA + AMP + H(+). Its function is as follows. Required for the formation of a threonylcarbamoyl group on adenosine at position 37 (t(6)A37) in tRNAs that read codons beginning with adenine. Is involved in the transfer of the threonylcarbamoyl moiety of threonylcarbamoyl-AMP (TC-AMP) to the N6 group of A37, together with TsaE and TsaB. TsaD likely plays a direct catalytic role in this reaction. This Buchnera aphidicola subsp. Cinara cedri (strain Cc) protein is tRNA N6-adenosine threonylcarbamoyltransferase.